Reading from the N-terminus, the 272-residue chain is Methylsterol monooxygenase 2-1 (272 aa).

3 helical membrane-spanning segments follow: residues 24-44 (IGSF…YIFL), 72-94 (LLLY…FRFM), and 107-127 (VVSA…YWGH). Positions 113–259 (LFYFIIEDFV…FVYMDWIFGT (147 aa)) constitute a Fatty acid hydroxylase domain. Positions 127 to 131 (HRILH) match the Histidine box-1 motif. Positions 140–144 (HSVHH) match the Histidine box-2 motif. Helical transmembrane passes span 162-182 (ILFL…HLIT) and 209-229 (NFLP…AYSA). The Histidine box-3 motif lies at 231–237 (FHDYHHR).

This sequence belongs to the sterol desaturase family. Fe cation is required as a cofactor. Strongly expressed in leaves, flowers, siliques and developing seeds.

Its subcellular location is the endoplasmic reticulum membrane. It catalyses the reaction 4,4-dimethyl-5alpha-cholest-7-en-3beta-ol + 6 Fe(II)-[cytochrome b5] + 3 O2 + 5 H(+) = 4alpha-carboxy-4beta-methyl-5alpha-cholest-7-ene-3beta-ol + 6 Fe(III)-[cytochrome b5] + 4 H2O. It carries out the reaction 24-methylidenelophenol + 6 Fe(II)-[cytochrome b5] + 3 O2 + 5 H(+) = 4alpha-carboxy-ergosta-7,24(24(1))-dien-3beta-ol + 6 Fe(III)-[cytochrome b5] + 4 H2O. Non-heme iron oxygenase involved in sterols biosynthesis by catalyzing the removal of the second methyl group at the C-4 position. 24-ethylidenelophenol and 24-ethyllophenol are the preferred substrates. Together with SMO2-2, required during embryogenesis, probably by maintaining sterols and auxin homeostasis. This Arabidopsis thaliana (Mouse-ear cress) protein is Methylsterol monooxygenase 2-1.